The sequence spans 306 residues: Histone-lysine N-methyltransferase SETMAR (306 aa).

The region spanning 60-123 (PGCACLKTPC…RCRNRVVQWG (64 aa)) is the Pre-SET domain. Zn(2+) is bound by residues Cys-62, Cys-64, Cys-69, Cys-74, Cys-76, Cys-105, Cys-109, Cys-111, and Cys-115. The 125-residue stretch at 126–250 (FHLQVFKTDH…PEEELSYDYS (125 aa)) folds into the SET domain. S-adenosyl-L-methionine-binding positions include 136 to 138 (KGW), Tyr-179, Arg-207, and 210 to 211 (NH). Residues Cys-213, Cys-274, Cys-276, and Cys-281 each coordinate Zn(2+). One can recognise a Post-SET domain in the interval 270 to 286 (LRKPCYCGARSCAAFLP).

It belongs to the class V-like SAM-binding methyltransferase superfamily.

Its subcellular location is the nucleus. The protein localises to the chromosome. The catalysed reaction is L-lysyl(36)-[histone H3] + 2 S-adenosyl-L-methionine = N(6),N(6)-dimethyl-L-lysyl(36)-[histone H3] + 2 S-adenosyl-L-homocysteine + 2 H(+). Functionally, histone methyltransferase that methylates 'Lys-4' and 'Lys-36' of histone H3, 2 specific tags for epigenetic transcriptional activation. Specifically mediates dimethylation of H3 'Lys-36'. This is Histone-lysine N-methyltransferase SETMAR from Bos taurus (Bovine).